Here is a 368-residue protein sequence, read N- to C-terminus: Methionine import ATP-binding protein MetN (368 aa).

A compositionally biased stretch (polar residues) spans Met1–Ala14. The tract at residues Met1–Thr27 is disordered. Residues Gly15–Thr27 show a composition bias toward low complexity. Residues Ile31–Val270 form the ABC transporter domain. Gly67–Ser74 contributes to the ATP binding site.

It belongs to the ABC transporter superfamily. Methionine importer (TC 3.A.1.24) family. In terms of assembly, the complex is composed of two ATP-binding proteins (MetN), two transmembrane proteins (MetI) and a solute-binding protein (MetQ).

The protein localises to the cell membrane. It catalyses the reaction L-methionine(out) + ATP + H2O = L-methionine(in) + ADP + phosphate + H(+). The catalysed reaction is D-methionine(out) + ATP + H2O = D-methionine(in) + ADP + phosphate + H(+). Its function is as follows. Part of the ABC transporter complex MetNIQ involved in methionine import. Responsible for energy coupling to the transport system. The polypeptide is Methionine import ATP-binding protein MetN (Corynebacterium jeikeium (strain K411)).